The following is a 301-amino-acid chain: GTPase Era (301 aa).

The 170-residue stretch at 4–173 folds into the Era-type G domain; sequence KAGFVALIGK…LECISKHLIP (170 aa). Residues 12–19 are G1; it reads GKPNAGKS. GTP is bound at residue 12–19; it reads GKPNAGKS. The tract at residues 38 to 42 is G2; it reads NATRK. A G3 region spans residues 64–67; it reads DTPG. Residues 64–68 and 122–125 contribute to the GTP site; these read DTPGL and SKID. The G4 stretch occupies residues 122-125; it reads SKID. The G5 stretch occupies residues 152–154; sequence LSA. In terms of domain architecture, KH type-2 spans 204–280; that stretch reads LSDEIPYESD…FLNLQVIAQK (77 aa).

This sequence belongs to the TRAFAC class TrmE-Era-EngA-EngB-Septin-like GTPase superfamily. Era GTPase family. As to quaternary structure, monomer.

It is found in the cytoplasm. Its subcellular location is the cell inner membrane. Functionally, an essential GTPase that binds both GDP and GTP, with rapid nucleotide exchange. Plays a role in 16S rRNA processing and 30S ribosomal subunit biogenesis and possibly also in cell cycle regulation and energy metabolism. The protein is GTPase Era of Helicobacter pylori (strain HPAG1).